The following is a 557-amino-acid chain: Urocanate hydratase (557 aa).

NAD(+) contacts are provided by residues 53-54 (GG), glutamine 131, 177-179 (GMG), aspartate 197, arginine 202, 243-244 (NA), 264-268 (QTSAH), 274-275 (YL), and tyrosine 323. Cysteine 411 is an active-site residue. Glycine 493 is an NAD(+) binding site.

It belongs to the urocanase family. NAD(+) is required as a cofactor.

The protein localises to the cytoplasm. The enzyme catalyses 4-imidazolone-5-propanoate = trans-urocanate + H2O. It functions in the pathway amino-acid degradation; L-histidine degradation into L-glutamate; N-formimidoyl-L-glutamate from L-histidine: step 2/3. Its function is as follows. Catalyzes the conversion of urocanate to 4-imidazolone-5-propionate. The sequence is that of Urocanate hydratase from Hahella chejuensis (strain KCTC 2396).